The primary structure comprises 284 residues: MNKQQLKAYFMLMRLHRPIPILLILWPTLTALVLASHGLPDISYLVIFTIGVVVMRTVGCIINDIADVDFDKHVARTNTRPLTSGQLSIKNAIWLCISLTLVAFICVLFLNLYTILLSFVALFLAILYPFCKRFFAIPQLILGLAFNFGIFMAFSTIQNQIPVEAWIFYIATICWTIAYDTIYALADREFDLEIGIKSSAVLFGNKVFRYILLFNFLSLLLLIILGIYCDFNSFFYLGVVICSLFFVRNYFLYKKLGITNCINAFSANHWIGLIIFIIAVIQYI.

9 consecutive transmembrane segments (helical) span residues 19 to 39 (IPILLILWPTLTALVLASHGL), 42 to 62 (ISYLVIFTIGVVVMRTVGCII), 85 to 105 (GQLSIKNAIWLCISLTLVAFI), 107 to 127 (VLFLNLYTILLSFVALFLAIL), 134 to 154 (FFAIPQLILGLAFNFGIFMAF), 165 to 185 (AWIFYIATICWTIAYDTIYAL), 211 to 231 (ILLFNFLSLLLLIILGIYCDF), 233 to 253 (SFFYLGVVICSLFFVRNYFLY), and 261 to 281 (CINAFSANHWIGLIIFIIAVI).

Belongs to the UbiA prenyltransferase family. Mg(2+) is required as a cofactor.

The protein localises to the cell inner membrane. It carries out the reaction all-trans-octaprenyl diphosphate + 4-hydroxybenzoate = 4-hydroxy-3-(all-trans-octaprenyl)benzoate + diphosphate. Its pathway is cofactor biosynthesis; ubiquinone biosynthesis. Catalyzes the prenylation of para-hydroxybenzoate (PHB) with an all-trans polyprenyl group. Mediates the second step in the final reaction sequence of ubiquinone-8 (UQ-8) biosynthesis, which is the condensation of the polyisoprenoid side chain with PHB, generating the first membrane-bound Q intermediate 3-octaprenyl-4-hydroxybenzoate. This chain is 4-hydroxybenzoate octaprenyltransferase, found in Francisella tularensis subsp. tularensis (strain FSC 198).